Consider the following 77-residue polypeptide: Large ribosomal subunit protein bL31 (77 aa).

The protein belongs to the bacterial ribosomal protein bL31 family. Type A subfamily. As to quaternary structure, part of the 50S ribosomal subunit.

In terms of biological role, binds the 23S rRNA. The protein is Large ribosomal subunit protein bL31 of Synechococcus elongatus (strain ATCC 33912 / PCC 7942 / FACHB-805) (Anacystis nidulans R2).